The primary structure comprises 968 residues: Translation initiation factor IF-2 (968 aa).

The segment covering 51-76 has biased composition (low complexity); the sequence is PAAGASKSEAPAAAPKAPASPAATRP. The segment at 51 to 369 is disordered; it reads PAAGASKSEA…GVSVPRGDGN (319 aa). A compositionally biased stretch (pro residues) spans 77–87; that stretch reads APAPGPAAPKA. The span at 93 to 102 shows a compositional bias: low complexity; that stretch reads EAPAAASAPS. Residues 103-112 show a composition bias toward pro residues; that stretch reads APAPAAPAPA. Composition is skewed to low complexity over residues 113-122, 128-170, and 239-254; these read APAAAASAPS, APST…GNNP, and GARP…PGAR. Residues 281 to 336 show a composition bias toward gly residues; sequence GRPGGGGRGPGRPGGAPGTGGAPGAGGGAPAGGGFGKGGRGRGGTQGAFGKGGAGR. Basic residues predominate over residues 337-346; that stretch reads GKQRKSKRAK. In terms of domain architecture, tr-type G spans 461–632; sequence ARPPVVTVMG…AVLLTADAAL (172 aa). The G1 stretch occupies residues 470-477; sequence GHVDHGKT. 470–477 is a binding site for GTP; that stretch reads GHVDHGKT. The segment at 495–499 is G2; sequence GITQH. Residues 520–523 are G3; sequence DTPG. GTP contacts are provided by residues 520 to 524 and 574 to 577; these read DTPGH and NKID. Residues 574 to 577 are G4; it reads NKID. A G5 region spans residues 610-612; it reads SAR.

It belongs to the TRAFAC class translation factor GTPase superfamily. Classic translation factor GTPase family. IF-2 subfamily.

The protein resides in the cytoplasm. One of the essential components for the initiation of protein synthesis. Protects formylmethionyl-tRNA from spontaneous hydrolysis and promotes its binding to the 30S ribosomal subunits. Also involved in the hydrolysis of GTP during the formation of the 70S ribosomal complex. This chain is Translation initiation factor IF-2, found in Arthrobacter sp. (strain FB24).